A 506-amino-acid polypeptide reads, in one-letter code: RNA-splicing ligase RtcB homolog (506 aa).

5 residues coordinate Mn(2+): Asp120, Cys123, His228, His260, and His354. Position 227 to 231 (227 to 231) interacts with GMP; it reads NHYAE. GMP-binding positions include 354 to 355, 403 to 406, Ser410, 429 to 432, and Lys505; these read HN, GGTM, and HGAG. Residue His429 is the GMP-histidine intermediate of the active site.

Belongs to the RtcB family. As to quaternary structure, catalytic component of the tRNA-splicing ligase complex. It depends on Mn(2+) as a cofactor.

It carries out the reaction a 3'-end 3'-phospho-ribonucleotide-RNA + a 5'-end dephospho-ribonucleoside-RNA + GTP = a ribonucleotidyl-ribonucleotide-RNA + GMP + diphosphate. It catalyses the reaction a 3'-end 2',3'-cyclophospho-ribonucleotide-RNA + a 5'-end dephospho-ribonucleoside-RNA + GTP + H2O = a ribonucleotidyl-ribonucleotide-RNA + GMP + diphosphate + H(+). Catalytic subunit of the tRNA-splicing ligase complex that acts by directly joining spliced tRNA halves to mature-sized tRNAs by incorporating the precursor-derived splice junction phosphate into the mature tRNA as a canonical 3',5'-phosphodiester. May act as an RNA ligase with broad substrate specificity, and may function toward other RNAs. This Drosophila melanogaster (Fruit fly) protein is RNA-splicing ligase RtcB homolog.